The chain runs to 249 residues: 23S rRNA (guanosine-2'-O-)-methyltransferase RlmB (249 aa).

3 residues coordinate S-adenosyl-L-methionine: G197, I217, and L226.

It belongs to the class IV-like SAM-binding methyltransferase superfamily. RNA methyltransferase TrmH family. RlmB subfamily.

The protein resides in the cytoplasm. The enzyme catalyses guanosine(2251) in 23S rRNA + S-adenosyl-L-methionine = 2'-O-methylguanosine(2251) in 23S rRNA + S-adenosyl-L-homocysteine + H(+). In terms of biological role, specifically methylates the ribose of guanosine 2251 in 23S rRNA. The protein is 23S rRNA (guanosine-2'-O-)-methyltransferase RlmB of Ralstonia nicotianae (strain ATCC BAA-1114 / GMI1000) (Ralstonia solanacearum).